A 362-amino-acid polypeptide reads, in one-letter code: MATVTDLPDDLVREIFSRVPLTSLRAVRSTCKKWNAISKYDILGKKAAAKNQFLEFMVTDSRVCSLRLDLQGIRSEEDLIDLSIKQISIPNKVDQVEISQVYHCDGLLLCIAKDNSSVMVWNPYLGQTKLIQPRKKLHRYDKFALGYDNNRNHKILRFLYEGSPRNVIIDVYDFSSDSWRVLDIDIDWHELFSHNSVSLKGNTYFFGRKGPRLPMLFKPPSRRFEYLTLSCVRNEKLAVLYSHLNRFGTIEICISTKIDPSAVSWTTFLRIDMTLINGLPDNFFVHSYATSFFFDEEKKVAVLFGTNRYRGRETCQYYQRACIVGDSGYFKAVNIELVFNSQLQSCQLVSSSYVPSLVQLQD.

Positions 1-47 constitute an F-box domain; that stretch reads MATVTDLPDDLVREIFSRVPLTSLRAVRSTCKKWNAISKYDILGKKA.

The protein is F-box protein At1g54550 of Arabidopsis thaliana (Mouse-ear cress).